The chain runs to 210 residues: Tetraspanin-31 (210 aa).

At 1 to 12 the chain is on the cytoplasmic side; the sequence is MVCGGFACSKNA. Residues 13-33 form a helical membrane-spanning segment; that stretch reads LCALNVVYMLVSLLLIGVAAW. Residues 34–44 are Extracellular-facing; that stretch reads GKGLGLVSSIH. The chain crosses the membrane as a helical span at residues 45–65; it reads IIGGVIAVGVFLLLIAVAGLV. Over 66–72 the chain is Cytoplasmic; sequence GAVNHHQ. Residues 73–93 traverse the membrane as a helical segment; the sequence is VLLFFYMIILGLVFIFQFVIS. Topologically, residues 94–173 are extracellular; the sequence is CSCLAINRSK…FLKHSDEALK (80 aa). N-linked (GlcNAc...) asparagine glycosylation is found at Asn-100, Asn-109, Asn-117, and Asn-134. The chain crosses the membrane as a helical span at residues 174-194; the sequence is ILGGVGLFFSFTEILGVWLAM. Residues 195-210 are Cytoplasmic-facing; the sequence is RFRNQKDPRANPSAFL.

The protein belongs to the tetraspanin (TM4SF) family.

It is found in the membrane. This chain is Tetraspanin-31 (TSPAN31), found in Homo sapiens (Human).